We begin with the raw amino-acid sequence, 154 residues long: Myoglobin (154 aa).

The 147-residue stretch at 2-148 folds into the Globin domain; it reads GLSDGEWQLV…FRHDMAAKYK (147 aa). At Ser-4 the chain carries Phosphoserine. His-65 is a binding site for nitrite. His-65 contacts O2. Thr-68 bears the Phosphothreonine mark. Heme b is bound at residue His-94.

This sequence belongs to the globin family. In terms of assembly, monomeric.

It is found in the cytoplasm. It localises to the sarcoplasm. The enzyme catalyses Fe(III)-heme b-[protein] + nitric oxide + H2O = Fe(II)-heme b-[protein] + nitrite + 2 H(+). It catalyses the reaction H2O2 + AH2 = A + 2 H2O. In terms of biological role, monomeric heme protein which primary function is to store oxygen and facilitate its diffusion within muscle tissues. Reversibly binds oxygen through a pentacoordinated heme iron and enables its timely and efficient release as needed during periods of heightened demand. Depending on the oxidative conditions of tissues and cells, and in addition to its ability to bind oxygen, it also has a nitrite reductase activity whereby it regulates the production of bioactive nitric oxide. Under stress conditions, like hypoxia and anoxia, it also protects cells against reactive oxygen species thanks to its pseudoperoxidase activity. This is Myoglobin (MB) from Osphranter rufus (Red kangaroo).